The primary structure comprises 59 residues: SPbeta prophage-derived uncharacterized protein YosB (59 aa).

The sequence is that of SPbeta prophage-derived uncharacterized protein YosB (yosB) from Bacillus subtilis (strain 168).